An 896-amino-acid polypeptide reads, in one-letter code: Microsomal triglyceride transfer protein large subunit (896 aa).

The signal sequence occupies residues 1–21; the sequence is MILLAVLFLCFFSSYSASVKG. The Vitellogenin domain maps to 28 to 659; it reads LNNERLYKLT…IFQYIGKAEL (632 aa). Cys-174 and Cys-194 are oxidised to a cystine.

As to quaternary structure, heterodimer; heterodimerizes with the protein disulfide isomerase (P4HB/PDI). Interacts with APOB. Interacts with PRAP1.

Its subcellular location is the endoplasmic reticulum. The protein localises to the golgi apparatus. It catalyses the reaction a 1,2-diacyl-sn-glycero-3-phosphocholine(in) = a 1,2-diacyl-sn-glycero-3-phosphocholine(out). The catalysed reaction is a 1,2-diacyl-sn-glycero-3-phosphoethanolamine(in) = a 1,2-diacyl-sn-glycero-3-phosphoethanolamine(out). It carries out the reaction a cholesterol ester(in) = a cholesterol ester(out). The enzyme catalyses a triacyl-sn-glycerol(in) = a triacyl-sn-glycerol(out). Its function is as follows. Catalyzes the transport of triglyceride, cholesteryl ester, and phospholipid between phospholipid surfaces. Required for the assembly and secretion of plasma lipoproteins that contain apolipoprotein B. May be involved in regulating cholesteryl ester biosynthesis in cells that produce lipoproteins. This Rattus norvegicus (Rat) protein is Microsomal triglyceride transfer protein large subunit (Mttp).